A 283-amino-acid chain; its full sequence is Bifunctional protein FolD (283 aa).

Residue 166–168 (GAS) coordinates NADP(+).

Belongs to the tetrahydrofolate dehydrogenase/cyclohydrolase family. Homodimer.

It carries out the reaction (6R)-5,10-methylene-5,6,7,8-tetrahydrofolate + NADP(+) = (6R)-5,10-methenyltetrahydrofolate + NADPH. The enzyme catalyses (6R)-5,10-methenyltetrahydrofolate + H2O = (6R)-10-formyltetrahydrofolate + H(+). It participates in one-carbon metabolism; tetrahydrofolate interconversion. Catalyzes the oxidation of 5,10-methylenetetrahydrofolate to 5,10-methenyltetrahydrofolate and then the hydrolysis of 5,10-methenyltetrahydrofolate to 10-formyltetrahydrofolate. In Coxiella burnetii (strain CbuK_Q154) (Coxiella burnetii (strain Q154)), this protein is Bifunctional protein FolD.